The primary structure comprises 234 residues: Ubiquitin thioesterase OTUB2 (234 aa).

Residues 40–231 enclose the OTU domain; that stretch reads TSIRKTKGDG…TSHYNILYAA (192 aa). Aspartate 48 is a catalytic residue. Cysteine 51 acts as the Nucleophile in catalysis. Catalysis depends on residues histidine 205 and histidine 224.

It belongs to the peptidase C65 family.

It carries out the reaction Thiol-dependent hydrolysis of ester, thioester, amide, peptide and isopeptide bonds formed by the C-terminal Gly of ubiquitin (a 76-residue protein attached to proteins as an intracellular targeting signal).. In terms of biological role, hydrolase that can remove conjugated ubiquitin from proteins in vitro and may therefore play an important regulatory role at the level of protein turnover by preventing degradation. Mediates deubiquitination of 'Lys-11'-,'Lys-48'- and 'Lys-63'-linked polyubiquitin chains, with a preference for 'Lys-63'-linked polyubiquitin chains. This chain is Ubiquitin thioesterase OTUB2 (Otub2), found in Mus musculus (Mouse).